The sequence spans 167 residues: Phosphopantetheine adenylyltransferase (167 aa).

Ser8 lines the substrate pocket. Residues 8-9 and His16 each bind ATP; that span reads SF. 3 residues coordinate substrate: Lys40, Leu74, and Arg88. Residues 89-91, Glu99, and 123-129 each bind ATP; these read GLR and WSFVSSS.

The protein belongs to the bacterial CoaD family. As to quaternary structure, homohexamer. Mg(2+) is required as a cofactor.

Its subcellular location is the cytoplasm. It carries out the reaction (R)-4'-phosphopantetheine + ATP + H(+) = 3'-dephospho-CoA + diphosphate. It functions in the pathway cofactor biosynthesis; coenzyme A biosynthesis; CoA from (R)-pantothenate: step 4/5. Reversibly transfers an adenylyl group from ATP to 4'-phosphopantetheine, yielding dephospho-CoA (dPCoA) and pyrophosphate. This is Phosphopantetheine adenylyltransferase from Deinococcus radiodurans (strain ATCC 13939 / DSM 20539 / JCM 16871 / CCUG 27074 / LMG 4051 / NBRC 15346 / NCIMB 9279 / VKM B-1422 / R1).